A 187-amino-acid polypeptide reads, in one-letter code: Elongation factor P (187 aa).

The protein belongs to the elongation factor P family.

Its subcellular location is the cytoplasm. The protein operates within protein biosynthesis; polypeptide chain elongation. Involved in peptide bond synthesis. Stimulates efficient translation and peptide-bond synthesis on native or reconstituted 70S ribosomes in vitro. Probably functions indirectly by altering the affinity of the ribosome for aminoacyl-tRNA, thus increasing their reactivity as acceptors for peptidyl transferase. The protein is Elongation factor P of Jannaschia sp. (strain CCS1).